A 702-amino-acid polypeptide reads, in one-letter code: Polyribonucleotide nucleotidyltransferase (702 aa).

The Mg(2+) site is built by aspartate 485 and aspartate 491. The 61-residue stretch at 552 to 612 (PRTEIICIDP…EGVKKAISII (61 aa)) folds into the KH domain. Positions 622 to 690 (GEIYLGKVTK…NQGRINLSRK (69 aa)) constitute an S1 motif domain.

The protein belongs to the polyribonucleotide nucleotidyltransferase family. Mg(2+) is required as a cofactor.

It is found in the cytoplasm. The enzyme catalyses RNA(n+1) + phosphate = RNA(n) + a ribonucleoside 5'-diphosphate. Involved in mRNA degradation. Catalyzes the phosphorolysis of single-stranded polyribonucleotides processively in the 3'- to 5'-direction. This is Polyribonucleotide nucleotidyltransferase from Clostridium botulinum (strain 657 / Type Ba4).